Here is a 356-residue protein sequence, read N- to C-terminus: Fructose-1,6-bisphosphatase class 1 (356 aa).

A disordered region spans residues Met-1 to Leu-26. Residues Glu-101, Asp-120, Leu-122, and Asp-123 each coordinate Mg(2+). Substrate contacts are provided by residues Asp-123–Ser-126 and Asn-211. Glu-283 lines the Mg(2+) pocket.

This sequence belongs to the FBPase class 1 family. As to quaternary structure, homotetramer. The cofactor is Mg(2+).

The protein localises to the cytoplasm. It catalyses the reaction beta-D-fructose 1,6-bisphosphate + H2O = beta-D-fructose 6-phosphate + phosphate. It functions in the pathway carbohydrate biosynthesis; Calvin cycle. The sequence is that of Fructose-1,6-bisphosphatase class 1 from Bradyrhizobium sp. (strain ORS 278).